Consider the following 851-residue polypeptide: Receptor like protein kinase S.2 (851 aa).

In terms of domain architecture, Protein kinase 1 spans 117–436; sequence FSDELILGSG…LPSFKSHPLY (320 aa). Residues 123-131 and Lys-146 each bind ATP; that span reads LGSGGFGRV. Asp-248 (proton acceptor) is an active-site residue. Positions 448 to 471 are disordered; sequence SATTTTTRTTMTTTTSTTSFNASS. Residues 532–819 enclose the Protein kinase 2 domain; it reads FSDARRVAEV…SILDGSERFF (288 aa). ATP is bound by residues 538–546 and Lys-560; that span reads VAEVDFGTA.

It belongs to the protein kinase superfamily. Ser/Thr protein kinase family.

The catalysed reaction is L-seryl-[protein] + ATP = O-phospho-L-seryl-[protein] + ADP + H(+). The enzyme catalyses L-threonyl-[protein] + ATP = O-phospho-L-threonyl-[protein] + ADP + H(+). This chain is Receptor like protein kinase S.2 (LECRKS2), found in Arabidopsis thaliana (Mouse-ear cress).